A 385-amino-acid chain; its full sequence is Polyketide synthase 1 (385 aa).

Residue C157 is part of the active site.

Belongs to the thiolase-like superfamily. Chalcone/stilbene synthases family. Expressed in glandular trichomes.

The protein localises to the cytoplasm. Its function is as follows. Polyketide synthase responsible for the biosynthesis of secondary metabolites. In Cannabis sativa (Hemp), this protein is Polyketide synthase 1 (PKSG1).